Consider the following 293-residue polypeptide: Epidermal growth factor-like protein 8 (293 aa).

An N-terminal signal peptide occupies residues 1-28 (MGLWAELCISLRGLSFFLVLMTGEGTRG). Residues 34–112 (SLGVCSKQTL…PHPGALTCDA (79 aa)) form the EMI domain. Disulfide bonds link Cys38–Cys97, Cys65–Cys71, Cys96–Cys110, Cys114–Cys124, Cys118–Cys130, Cys132–Cys141, Cys148–Cys159, Cys155–Cys168, and Cys170–Cys183. Residue Asn50 is glycosylated (N-linked (GlcNAc...) asparagine). One can recognise an EGF-like 1 domain in the interval 111 to 142 (DAICSKPCLNGGVCTGPDRCECAPGWGGKHCH). The region spanning 144–184 (DVDECRASLTLCSHGCLNTLGSFLCSCPHPLVLGLDGRTCA) is the EGF-like 2; calcium-binding domain. Residues 206–235 (SEEERALRWEVAELRGRLEKLEQWATQAGA) are a coiled coil.

In terms of tissue distribution, ubiquitously expressed in brain, kidney, thymus and lung.

It localises to the secreted. The sequence is that of Epidermal growth factor-like protein 8 (Egfl8) from Mus musculus (Mouse).